The following is a 154-amino-acid chain: tRNA (cytidine(34)-2'-O)-methyltransferase (154 aa).

Positions 78, 100, 122, and 130 each coordinate S-adenosyl-L-methionine.

Belongs to the class IV-like SAM-binding methyltransferase superfamily. RNA methyltransferase TrmH family. TrmL subfamily. Homodimer.

It localises to the cytoplasm. The enzyme catalyses cytidine(34) in tRNA + S-adenosyl-L-methionine = 2'-O-methylcytidine(34) in tRNA + S-adenosyl-L-homocysteine + H(+). It carries out the reaction 5-carboxymethylaminomethyluridine(34) in tRNA(Leu) + S-adenosyl-L-methionine = 5-carboxymethylaminomethyl-2'-O-methyluridine(34) in tRNA(Leu) + S-adenosyl-L-homocysteine + H(+). Methylates the ribose at the nucleotide 34 wobble position in the two leucyl isoacceptors tRNA(Leu)(CmAA) and tRNA(Leu)(cmnm5UmAA). Catalyzes the methyl transfer from S-adenosyl-L-methionine to the 2'-OH of the wobble nucleotide. The chain is tRNA (cytidine(34)-2'-O)-methyltransferase from Methylovorus glucosotrophus (strain SIP3-4).